The chain runs to 273 residues: Cell division protein ZipA (273 aa).

Position 1 (methionine 1) is a topological domain, periplasmic. A helical membrane pass occupies residues 2–22; the sequence is DIGLREWLIVIGIIVIAGILF. Topologically, residues 23–273 are cytoplasmic; sequence DGWRRMRGGK…ERRQMTIKQR (251 aa). A disordered region spans residues 61–127; that stretch reads VVNREHEPSL…DLQERPQKEQ (67 aa).

The protein belongs to the ZipA family. Interacts with FtsZ via their C-terminal domains.

Its subcellular location is the cell inner membrane. Its function is as follows. Essential cell division protein that stabilizes the FtsZ protofilaments by cross-linking them and that serves as a cytoplasmic membrane anchor for the Z ring. Also required for the recruitment to the septal ring of downstream cell division proteins. This is Cell division protein ZipA from Stutzerimonas stutzeri (strain A1501) (Pseudomonas stutzeri).